The chain runs to 134 residues: UPF0412 protein YaaI (134 aa).

A signal peptide spans 1 to 23 (MRSVLTISASLLFGLALSSVAHA).

Belongs to the UPF0412 family.

In Salmonella choleraesuis (strain SC-B67), this protein is UPF0412 protein YaaI.